Here is a 156-residue protein sequence, read N- to C-terminus: Small ribosomal subunit protein uS7 (156 aa).

It belongs to the universal ribosomal protein uS7 family. In terms of assembly, part of the 30S ribosomal subunit. Contacts proteins S9 and S11.

In terms of biological role, one of the primary rRNA binding proteins, it binds directly to 16S rRNA where it nucleates assembly of the head domain of the 30S subunit. Is located at the subunit interface close to the decoding center, probably blocks exit of the E-site tRNA. This is Small ribosomal subunit protein uS7 from Thermoanaerobacter pseudethanolicus (strain ATCC 33223 / 39E) (Clostridium thermohydrosulfuricum).